A 242-amino-acid polypeptide reads, in one-letter code: uncharacterized protein (242 aa).

Positions 1 to 11 (MNFEAASAPSQ) are enriched in low complexity. The tract at residues 1 to 45 (MNFEAASAPSQQPSPTPAPKTEEPKENGGSEQQADQPENSKKDDV) is disordered.

The protein to U.parvum UU171.

This is an uncharacterized protein from Ureaplasma parvum serovar 3 (strain ATCC 700970).